A 348-amino-acid chain; its full sequence is GTPase Obg (348 aa).

The Obg domain maps to 1–160; the sequence is MHFLDQAKIF…MWVWLRLKLL (160 aa). The tract at residues 120–145 is disordered; the sequence is RGGDGGRGNASYKTSTNRAPRQHGPG. Residues 161–328 form the OBG-type G domain; it reads ADAGLVGLPN…VLDKLLEAIG (168 aa). Residues 167 to 174, 192 to 196, 213 to 216, 280 to 283, and 309 to 311 contribute to the GTP site; these read GLPNAGKS, FTTLR, DIPG, NKID, and SGA. Mg(2+) contacts are provided by S174 and T194. The interval 326 to 348 is disordered; it reads AIGQPEPGPDADEEEKGGDWSPI.

The protein belongs to the TRAFAC class OBG-HflX-like GTPase superfamily. OBG GTPase family. As to quaternary structure, monomer. Mg(2+) serves as cofactor.

The protein localises to the cytoplasm. An essential GTPase which binds GTP, GDP and possibly (p)ppGpp with moderate affinity, with high nucleotide exchange rates and a fairly low GTP hydrolysis rate. Plays a role in control of the cell cycle, stress response, ribosome biogenesis and in those bacteria that undergo differentiation, in morphogenesis control. This is GTPase Obg from Sphingopyxis alaskensis (strain DSM 13593 / LMG 18877 / RB2256) (Sphingomonas alaskensis).